Here is a 346-residue protein sequence, read N- to C-terminus: Upstream stimulatory factor 2 (346 aa).

Disordered regions lie at residues 1–44 (MDML…PGAE) and 215–244 (APRT…NEVE). Residues 11 to 20 (ASSATAAAAA) show a composition bias toward low complexity. Residues 226–244 (DGTRTPRDERRRAQHNEVE) are compositionally biased toward basic and acidic residues. Positions 235-290 (RRRAQHNEVERRRRDKINNWIVQLSKIIPDCHADNSKTGASKGGILSKACDYIREL) constitute a bHLH domain. A leucine-zipper region spans residues 307–328 (LQMDNELLRQQIEELKNENALL).

Efficient DNA binding requires dimerization with another bHLH protein. Binds DNA as a homodimer or a heterodimer (USF1/USF2). Interacts with MAF.

It localises to the nucleus. Functionally, transcription factor that binds to a symmetrical DNA sequence (E-boxes) (5'-CACGTG-3') that is found in a variety of viral and cellular promoters. This chain is Upstream stimulatory factor 2 (Usf2), found in Mus musculus (Mouse).